We begin with the raw amino-acid sequence, 626 residues long: DNA (cytosine-5)-methyltransferase DRM2 (626 aa).

UBA domains follow at residues 59 to 101 and 109 to 150; these read GFSD…ISKY and SSKS…LLSC. Residues 160–187 are compositionally biased toward acidic residues; sequence VEEEDGIDWSSSDDDTNYTDMLNSDDEK. 2 disordered regions span residues 160–196 and 245–282; these read VEEE…ENGS and TEHE…PNPM. A UBA 3 domain is found at 190 to 232; it reads NSNENGSKIRSLVKMGFSELEASLAVERCGENVDIAELTDFLC. The span at 262 to 276 shows a compositional bias: basic and acidic residues; sequence ESKGEPRSSVDDEPI. Positions 295 to 626 constitute an SAM-dependent MTase DRM-type domain; the sequence is THRSLPELAR…EVVRARMRGS (332 aa).

It belongs to the class I-like SAM-binding methyltransferase superfamily. DRM-methyltransferase family. As to quaternary structure, interacts with RDM1. Expressed in roots, inflorescences and at lower levels in leaves.

The protein resides in the nucleus. It localises to the nucleoplasm. The catalysed reaction is a 2'-deoxycytidine in DNA + S-adenosyl-L-methionine = a 5-methyl-2'-deoxycytidine in DNA + S-adenosyl-L-homocysteine + H(+). Involved in de novo DNA methylation. Controls asymmetric and CpNpG methylation. Required for FWA gene silencing but not for the maintenance of SUP gene silencing. Functionally redundant to CMT3 to maintain non-CpG methylation. Involved in RNA-directed DNA methylation (RdDM). Acts as major DNA methyltransferase in the RdDM pathway, and is essential for RNA-directed de novo DNA methylation of cytosines in all sequence contexts. Associates with long non-coding RNA (lncRNA) produced by RNA polymerase V (Pol V). This association is dependent on AGO4 and IDN2, and results in DNA methylation of RdDM target loci. The chain is DNA (cytosine-5)-methyltransferase DRM2 (DRM2) from Arabidopsis thaliana (Mouse-ear cress).